A 233-amino-acid chain; its full sequence is UPF0758 protein RoseRS_0767 (233 aa).

The MPN domain occupies 107–229; that stretch reads LIRSPTDAAQ…FVSMRERGLG (123 aa). Residues histidine 178, histidine 180, and aspartate 191 each contribute to the Zn(2+) site. Positions 178 to 191 match the JAMM motif motif; it reads HNHPSGDPTPSPED.

Belongs to the UPF0758 family.

The sequence is that of UPF0758 protein RoseRS_0767 from Roseiflexus sp. (strain RS-1).